The sequence spans 311 residues: Glutaminase (311 aa).

Serine 66, asparagine 116, glutamate 162, asparagine 169, tyrosine 193, tyrosine 245, and valine 263 together coordinate substrate.

This sequence belongs to the glutaminase family. As to quaternary structure, homotetramer.

It catalyses the reaction L-glutamine + H2O = L-glutamate + NH4(+). The protein is Glutaminase of Rhodopseudomonas palustris (strain TIE-1).